A 267-amino-acid polypeptide reads, in one-letter code: Type II pantothenate kinase (267 aa).

6-13 (DAGGTLIK) is an ATP binding site. Glutamate 70 serves as the catalytic Proton acceptor. ATP-binding positions include threonine 99, 121–125 (GGMIQ), tyrosine 137, and serine 225.

It belongs to the type II pantothenate kinase family. Homodimer.

The protein localises to the cytoplasm. The catalysed reaction is (R)-pantothenate + ATP = (R)-4'-phosphopantothenate + ADP + H(+). It functions in the pathway cofactor biosynthesis; coenzyme A biosynthesis; CoA from (R)-pantothenate: step 1/5. Its function is as follows. Catalyzes the phosphorylation of pantothenate (Pan), the first step in CoA biosynthesis. The sequence is that of Type II pantothenate kinase from Staphylococcus aureus (strain bovine RF122 / ET3-1).